The primary structure comprises 319 residues: ATP-dependent 6-phosphofructokinase (319 aa).

Gly-11 lines the ATP pocket. 21 to 25 (RAVTR) provides a ligand contact to ADP. ATP is bound by residues 72-73 (RY) and 102-105 (GDGS). A Mg(2+)-binding site is contributed by Asp-103. 125–127 (TID) contributes to the substrate binding site. Asp-127 functions as the Proton acceptor in the catalytic mechanism. Position 154 (Arg-154) interacts with ADP. Substrate is bound by residues Arg-162 and 169–171 (MGR). Residues 185–187 (GAD) and 213–215 (KDH) contribute to the ADP site. Residues Glu-222, Arg-243, and 249-252 (HMQR) each bind substrate.

This sequence belongs to the phosphofructokinase type A (PFKA) family. ATP-dependent PFK group I subfamily. Prokaryotic clade 'B1' sub-subfamily. Homotetramer. It depends on Mg(2+) as a cofactor.

The protein localises to the cytoplasm. The enzyme catalyses beta-D-fructose 6-phosphate + ATP = beta-D-fructose 1,6-bisphosphate + ADP + H(+). It participates in carbohydrate degradation; glycolysis; D-glyceraldehyde 3-phosphate and glycerone phosphate from D-glucose: step 3/4. With respect to regulation, allosterically activated by ADP and other diphosphonucleosides, and allosterically inhibited by phosphoenolpyruvate. The binding affinities for these effectors are decreased however, and therefore the allosteric effect becomes apparent only at high effector concentrations. Functionally, catalyzes the phosphorylation of D-fructose 6-phosphate to fructose 1,6-bisphosphate by ATP, the first committing step of glycolysis. This Lactobacillus delbrueckii subsp. bulgaricus protein is ATP-dependent 6-phosphofructokinase.